The primary structure comprises 56 residues: Small ribosomal subunit protein uS14 (56 aa).

The Zn(2+) site is built by C21, C24, C39, and C42.

It belongs to the universal ribosomal protein uS14 family. In terms of assembly, component of the 40S small ribosomal subunit. Zn(2+) is required as a cofactor.

The protein resides in the cytoplasm. It is found in the cytosol. It localises to the rough endoplasmic reticulum. In Lonomia obliqua (Moth), this protein is Small ribosomal subunit protein uS14 (RpS29).